A 300-amino-acid polypeptide reads, in one-letter code: Regulatory protein NocR (300 aa).

Residues 1-59 enclose the HTH lysR-type domain; the sequence is MIQSRQLEAFRPVMLTGGMTSAANLVRITQPAISRLIRDLEEEIGISLFERTGNRLRPT. A DNA-binding region (H-T-H motif) is located at residues 19–38; that stretch reads MTSAANLVRITQPAISRLIR.

This sequence belongs to the LysR transcriptional regulatory family.

Functionally, positive regulatory protein for the noc operon involved in nopaline catabolism and uptake. The sequence is that of Regulatory protein NocR (nocR) from Agrobacterium tumefaciens (strain T37).